A 452-amino-acid polypeptide reads, in one-letter code: Membrane-bound acylglycerophosphatidylinositol O-acyltransferase mboa-7 (452 aa).

4 helical membrane passes run 4 to 24 (IIGL…FSFA), 53 to 73 (PRIA…AFAP), 79 to 99 (FYVF…HYFL), and 104 to 124 (VASH…GITF). N-linked (GlcNAc...) asparagine glycosylation is present at Asn137. Transmembrane regions (helical) follow at residues 153 to 173 (FAYF…YQML), 220 to 240 (AIWE…FVVF), and 244 to 264 (VYSA…GIYP). Asn319 is a glycosylation site (N-linked (GlcNAc...) asparagine). The active site involves His350. Residues 354-374 (AGYFMSFGVVAMCAILEDVIF) traverse the membrane as a helical segment. Asn414 carries an N-linked (GlcNAc...) asparagine glycan. Residues 421-441 (FWSSIYYWLPLLCVPFYIYSV) traverse the membrane as a helical segment.

This sequence belongs to the membrane-bound acyltransferase family.

It localises to the membrane. It carries out the reaction a 1-acyl-sn-glycero-3-phospho-(1D-myo-inositol) + an acyl-CoA = a 1,2-diacyl-sn-glycero-3-phospho-(1D-myo-inositol) + CoA. The catalysed reaction is a fatty acyl-[ACP] + a 1-acyl-sn-glycero-3-phosphate = a 1,2-diacyl-sn-glycero-3-phosphate + holo-[ACP]. Its pathway is lipid metabolism; phospholipid metabolism. Functionally, acyltransferase which mediates the conversion of lysophosphatidylinositol (1-acylglycerophosphatidylinositol or LPI) into phosphatidylinositol (1,2-diacyl-sn-glycero-3-phosphoinositol or PI) (LPIAT activity). Prefers arachidonoyl-CoA or eicosapentaenoic acid (EPA) as the acyl donor. Prefers sn-2-LPI rather than sn-1-LPI as the acyl acceptor. Lysophospholipid acyltransferases (LPLATs) catalyze the reacylation step of the phospholipid remodeling pathway also known as the Lands cycle. In Caenorhabditis briggsae, this protein is Membrane-bound acylglycerophosphatidylinositol O-acyltransferase mboa-7.